A 20-amino-acid polypeptide reads, in one-letter code: VVGGEVARAHSWPWQISLQY.

A Peptidase S1 domain is found at V1 to Y20.

The protein belongs to the peptidase S1 family. Elastase subfamily.

Its function is as follows. Digests most rapidly at the C-terminal side of alanine residues, but also cleaves at valine and leucine residues. The protein is Elastase of Gadus morhua (Atlantic cod).